The sequence spans 263 residues: uncharacterized protein (263 aa).

Residues 198 to 224 (KRSSDSFVSLKPGEDEHSPLEISTCGN) are disordered.

This is an uncharacterized protein from Saccharomyces cerevisiae (strain ATCC 204508 / S288c) (Baker's yeast).